Here is an 876-residue protein sequence, read N- to C-terminus: Valine--tRNA ligase (876 aa).

The 'HIGH' region signature appears at 44–54 (PNVTGKLHLGH). A 'KMSKS' region motif is present at residues 520–524 (KMSKS). Lysine 523 is an ATP binding site. The stretch at 805-876 (LEGLIDMDKE…VKARIEQLKA (72 aa)) forms a coiled coil.

It belongs to the class-I aminoacyl-tRNA synthetase family. ValS type 1 subfamily. Monomer.

Its subcellular location is the cytoplasm. The catalysed reaction is tRNA(Val) + L-valine + ATP = L-valyl-tRNA(Val) + AMP + diphosphate. Catalyzes the attachment of valine to tRNA(Val). As ValRS can inadvertently accommodate and process structurally similar amino acids such as threonine, to avoid such errors, it has a 'posttransfer' editing activity that hydrolyzes mischarged Thr-tRNA(Val) in a tRNA-dependent manner. This is Valine--tRNA ligase from Staphylococcus aureus (strain MRSA252).